We begin with the raw amino-acid sequence, 155 residues long: MTYNTNTSLSSYAGLSAFALSVFCILWGTARTGSFLKEKALITCAADILARQAPELGVTSRTLRMVPSSPIPQAEVLRGKKNTGEEIFLYFFPLRGMYGSFPTLFLYDKKDGARFCHLIGNHPTPRDARFYGISSARIALQCRKIEHLHQTVAYE.

The signal sequence occupies residues 1–30 (MTYNTNTSLSSYAGLSAFALSVFCILWGTA).

This is an uncharacterized protein from Treponema pallidum (strain Nichols).